The sequence spans 165 residues: RNA pyrophosphohydrolase (165 aa).

The 144-residue stretch at 6–149 folds into the Nudix hydrolase domain; that stretch reads GYRPNVGIII…KQSVYHQALT (144 aa). The Nudix box motif lies at 38–59; that stretch reads GGVRENETPQQAVFRELKEEVG.

This sequence belongs to the Nudix hydrolase family. RppH subfamily. A divalent metal cation is required as a cofactor.

Its function is as follows. Accelerates the degradation of transcripts by removing pyrophosphate from the 5'-end of triphosphorylated RNA, leading to a more labile monophosphorylated state that can stimulate subsequent ribonuclease cleavage. This is RNA pyrophosphohydrolase from Hydrogenovibrio crunogenus (strain DSM 25203 / XCL-2) (Thiomicrospira crunogena).